Here is a 1396-residue protein sequence, read N- to C-terminus: DNA-directed RNA polymerase subunit beta' (1396 aa).

The Zn(2+) site is built by C72, C74, C87, and C90. D463, D465, and D467 together coordinate Mg(2+). Zn(2+)-binding residues include C814, C889, C896, and C899.

Belongs to the RNA polymerase beta' chain family. The RNAP catalytic core consists of 2 alpha, 1 beta, 1 beta' and 1 omega subunit. When a sigma factor is associated with the core the holoenzyme is formed, which can initiate transcription. Mg(2+) serves as cofactor. It depends on Zn(2+) as a cofactor.

It carries out the reaction RNA(n) + a ribonucleoside 5'-triphosphate = RNA(n+1) + diphosphate. Its function is as follows. DNA-dependent RNA polymerase catalyzes the transcription of DNA into RNA using the four ribonucleoside triphosphates as substrates. This Chlamydia muridarum (strain MoPn / Nigg) protein is DNA-directed RNA polymerase subunit beta'.